The following is a 244-amino-acid chain: Recombination directionality factor (244 aa).

A disordered region spans residues 1–34 (MAKRSIWAGDEDNKPKKRETYADDTVGRFHSGYS). The span at 11 to 27 (EDNKPKKRETYADDTVG) shows a compositional bias: basic and acidic residues.

As to quaternary structure, interacts with the integrase.

Functionally, recombination directionality factor that interacts directly with the integrase tetramer to activate excision and inhibit integration. In Streptomyces coelicolor (Bacteriophage phi-C31), this protein is Recombination directionality factor.